Consider the following 752-residue polypeptide: Ribosomal protein S6 kinase 2 alpha (752 aa).

A Protein kinase 1 domain is found at 80-339 (FELLKVLGQG…AEEIKRHPFY (260 aa)). Residues 86 to 94 (LGQGSFGKV) and Lys-112 contribute to the ATP site. Residue Asp-205 is the Proton acceptor of the active site. Ser-239 is subject to Phosphoserine. In terms of domain architecture, AGC-kinase C-terminal spans 340–409 (STIDWNKLYR…VATGLMEDSK (70 aa)). At Thr-377 the chain carries Phosphothreonine. Ser-381 is subject to Phosphoserine. Residue Ser-398 is modified to Phosphoserine; by autocatalysis. The 258-residue stretch at 435–692 (YVVKEAIGVG…AKQVLQHPWI (258 aa)) folds into the Protein kinase 2 domain. ATP-binding positions include 441-449 (IGVGSYSVC) and Lys-464. The active-site Proton acceptor is Asp-552. A Phosphothreonine modification is found at Thr-590. A Phosphoserine modification is found at Ser-749.

This sequence belongs to the protein kinase superfamily. AGC Ser/Thr protein kinase family. S6 kinase subfamily. Mg(2+) is required as a cofactor. In terms of processing, autophosphorylated on Ser-398, as part of the activation process. Small and large intestine, spleen, stomach, and bursa, and to a lesser extent lung and kidney.

The enzyme catalyses L-seryl-[protein] + ATP = O-phospho-L-seryl-[protein] + ADP + H(+). It catalyses the reaction L-threonyl-[protein] + ATP = O-phospho-L-threonyl-[protein] + ADP + H(+). With respect to regulation, activated by multiple phosphorylations on threonine and serine residues. Its function is as follows. Serine/threonine kinase that may play a role in mediating the growth-factor and stress induced activation of transcription. In Gallus gallus (Chicken), this protein is Ribosomal protein S6 kinase 2 alpha (RPS6KA).